The primary structure comprises 165 residues: Phosphopantetheine adenylyltransferase (165 aa).

S10 lines the substrate pocket. ATP is bound by residues 10–11 and H18; that span reads SF. K42, L74, and R88 together coordinate substrate. Residues 89–91, E99, and 124–130 each bind ATP; these read GLR and YSFISSS.

It belongs to the bacterial CoaD family. As to quaternary structure, homohexamer. Requires Mg(2+) as cofactor.

It localises to the cytoplasm. The catalysed reaction is (R)-4'-phosphopantetheine + ATP + H(+) = 3'-dephospho-CoA + diphosphate. It participates in cofactor biosynthesis; coenzyme A biosynthesis; CoA from (R)-pantothenate: step 4/5. Reversibly transfers an adenylyl group from ATP to 4'-phosphopantetheine, yielding dephospho-CoA (dPCoA) and pyrophosphate. In Macrococcus caseolyticus (strain JCSC5402) (Macrococcoides caseolyticum), this protein is Phosphopantetheine adenylyltransferase.